The following is a 420-amino-acid chain: Anaerobic glycerol-3-phosphate dehydrogenase subunit B (420 aa).

This sequence belongs to the anaerobic G-3-P dehydrogenase subunit B family. As to quaternary structure, composed of a catalytic GlpA/B dimer and of membrane bound GlpC. FMN is required as a cofactor.

The catalysed reaction is a quinone + sn-glycerol 3-phosphate = dihydroxyacetone phosphate + a quinol. It functions in the pathway polyol metabolism; glycerol degradation via glycerol kinase pathway; glycerone phosphate from sn-glycerol 3-phosphate (anaerobic route): step 1/1. Functionally, conversion of glycerol 3-phosphate to dihydroxyacetone. Uses fumarate or nitrate as electron acceptor. This is Anaerobic glycerol-3-phosphate dehydrogenase subunit B from Pectobacterium atrosepticum (strain SCRI 1043 / ATCC BAA-672) (Erwinia carotovora subsp. atroseptica).